A 299-amino-acid polypeptide reads, in one-letter code: Tetrahydromethanopterin S-methyltransferase subunit E (299 aa).

6 consecutive transmembrane segments (helical) span residues 57 to 77, 80 to 100, 133 to 153, 158 to 178, 226 to 246, and 262 to 282; these read AISGEPVSYGLYVAVAGTIAW, INAGLNAVLAIIVGSGVAAIV, IGPIVGHGFIAVFTMTLAAYL, LGNPFPLPLVALIFGITVGAI, YFCSRFGGPLTGLCFGLIIFL, and VTKTSIALLVGLLVVAVAAVI.

It belongs to the MtrE family. In terms of assembly, the complex is composed of 8 subunits; MtrA, MtrB, MtrC, MtrD, MtrE, MtrF, MtrG and MtrH.

Its subcellular location is the cell membrane. It catalyses the reaction 5-methyl-5,6,7,8-tetrahydromethanopterin + coenzyme M + 2 Na(+)(in) = 5,6,7,8-tetrahydromethanopterin + methyl-coenzyme M + 2 Na(+)(out). It participates in one-carbon metabolism; methanogenesis from CO(2); methyl-coenzyme M from 5,10-methylene-5,6,7,8-tetrahydromethanopterin: step 2/2. Its function is as follows. Part of a complex that catalyzes the formation of methyl-coenzyme M and tetrahydromethanopterin from coenzyme M and methyl-tetrahydromethanopterin. This is an energy-conserving, sodium-ion translocating step. The sequence is that of Tetrahydromethanopterin S-methyltransferase subunit E from Methanococcus maripaludis (strain C7 / ATCC BAA-1331).